The following is a 224-amino-acid chain: TM2 domain-containing protein amaretto (224 aa).

An N-terminal signal peptide occupies residues 1–18 (MRIFYGLLAFLVARQHDA). Topologically, residues 19–154 (QAIQARSDKE…FLRAGVPCVR (136 aa)) are extracellular. N-linked (GlcNAc...) asparagine glycans are attached at residues Asn-102 and Asn-142. Residues 155-175 (YTDHYFVTTLIYSMLLGFLGM) traverse the membrane as a helical segment. The 49-residue stretch at 157–205 (DHYFVTTLIYSMLLGFLGMDRFCLGQTGTAVGKLLTMGGVGVWWIIDVI) folds into the TM2 domain. The Cytoplasmic portion of the chain corresponds to 176–189 (DRFCLGQTGTAVGK). The chain crosses the membrane as a helical span at residues 190–210 (LLTMGGVGVWWIIDVILLITN). Over 211–224 (NLLPEDGSNWNPYV) the chain is Extracellular.

It belongs to the TM2 family.

The protein resides in the membrane. Positive regulator of Notch signaling. Maternal neurogenic factor involved in Notch signaling-dependent neuroectodermal specification during early embryogenesis. Functions cooperatively with amx/TM2D3 and bisc/TM2D1. The polypeptide is TM2 domain-containing protein amaretto (Drosophila melanogaster (Fruit fly)).